Reading from the N-terminus, the 455-residue chain is Argininosuccinate synthase (455 aa).

ATP-binding positions include 17–25 (AFSGGLDTS) and Ala-43. Tyr-99 contacts L-citrulline. ATP-binding residues include Gly-129 and Thr-131. L-aspartate contacts are provided by Thr-131, Asn-135, and Asp-136. Residue Asn-135 coordinates L-citrulline. Asp-136 contributes to the ATP binding site. L-citrulline contacts are provided by Arg-139 and Ser-192. Residue Asp-194 participates in ATP binding. L-citrulline-binding residues include Thr-201, Glu-203, and Glu-280. Residues 434-448 (TGLPQVDNNNLSSGR) are compositionally biased toward polar residues. Residues 434 to 455 (TGLPQVDNNNLSSGRGLQDKRQ) are disordered.

It belongs to the argininosuccinate synthase family. Type 2 subfamily. In terms of assembly, homotetramer.

The protein localises to the cytoplasm. The catalysed reaction is L-citrulline + L-aspartate + ATP = 2-(N(omega)-L-arginino)succinate + AMP + diphosphate + H(+). Its pathway is amino-acid biosynthesis; L-arginine biosynthesis; L-arginine from L-ornithine and carbamoyl phosphate: step 2/3. The chain is Argininosuccinate synthase (argG) from Yersinia pestis.